The chain runs to 79 residues: Protein OPG081 (79 aa).

Over 2–8 the chain is Intravirion; it reads VDAITVL. A helical transmembrane segment spans residues 9-29; sequence TAIGITVLMLLMVISGAALIV. Residues 30-47 lie on the Virion surface side of the membrane; that stretch reads KELNPNDIFTMQSLKFNR. Residues 48-68 form a helical membrane-spanning segment; it reads AVTIFKYIGLFIYIPGTIILY. The Intravirion segment spans residues 69–79; sequence ATYVKSLLMKS.

It belongs to the orthopoxvirus OPG081 family.

The protein resides in the virion membrane. Its function is as follows. Envelope protein. The sequence is that of Protein OPG081 (OPG081) from Vaccinia virus (strain Western Reserve) (VACV).